The primary structure comprises 266 residues: Gasdermin bGSDM (266 aa).

A lipid anchor (S-palmitoyl cysteine) is attached at C4. 4 consecutive transmembrane segments (beta stranded) span residues 69–85 (INGQKTENLSFSIGINI), 97–114 (AGIEAQYNQARKVRFEFS), 163–180 (EFTVAAEKSGGGSIQLDV), and 189–205 (GKLKVEASVSSQSTVTY). The interval 238–266 (AMALDAAGGVMPSDSALLDEGGLLDLEGF) is C-terminal region.

This sequence belongs to the bacterial gasdermin family. Monomer in solution. In terms of assembly, homooligomer; forms homooligomeric ring-shaped pores when inserted in membranes with 48-54 subunits per ring. Palmitoylation helps stabilize the inactive state; may self palmitoylate. Palmitoylation plays a significant role in pore formation.

It localises to the cytoplasm. Its subcellular location is the cell inner membrane. The full-length protein before cleavage is inactive: intramolecular interactions between the N-terminal domain and the C-terminal region as well as the lipid modification, mediate autoinhibition. The pyroptosis-like-inducing activity is carried by the released N-terminal domain (Gasdermin bGSDM, N-terminus). Precursor of a pore-forming protein involved in defense against bacteriophages. Expression of bGSDM and the neighboring protease gene (Ga0334635_1659) is toxic in E.coli. Cleavage of this precursor by its dedicated protease releases the active moiety (gasdermin bGSDM, N-terminus) which inserts into membranes, forming pores and triggering cell death. In terms of biological role, pore-forming protein that causes membrane permeabilization, probably via a pyroptosis-like activity. Makes ring-like pores with an interior pore diameter of 200-300 Angstroms, when integrated in liposomes. In Vitiosangium sp. (strain GDMCC 1.1324), this protein is Gasdermin bGSDM.